A 290-amino-acid chain; its full sequence is Pyridoxal kinase PdxY (290 aa).

Residues Ser-9 and 44–45 (TQ) each bind substrate. 4 residues coordinate ATP: Asp-112, Val-144, Glu-149, and Lys-182. Asp-221 is a binding site for substrate.

This sequence belongs to the pyridoxine kinase family. PdxY subfamily. As to quaternary structure, homodimer. It depends on Mg(2+) as a cofactor.

It carries out the reaction pyridoxal + ATP = pyridoxal 5'-phosphate + ADP + H(+). It functions in the pathway cofactor metabolism; pyridoxal 5'-phosphate salvage; pyridoxal 5'-phosphate from pyridoxal: step 1/1. Pyridoxal kinase involved in the salvage pathway of pyridoxal 5'-phosphate (PLP). Catalyzes the phosphorylation of pyridoxal to PLP. This Vibrio vulnificus (strain CMCP6) protein is Pyridoxal kinase PdxY.